Here is a 554-residue protein sequence, read N- to C-terminus: Trimethyltridecatetraene synthase (554 aa).

The helical transmembrane segment at 1–21 threads the bilayer; the sequence is MSAAVALAVILAVYVVLRYIS. Cysteine 464 contributes to the heme binding site.

The protein belongs to the cytochrome P450 family. It depends on heme as a cofactor.

The protein resides in the membrane. The catalysed reaction is (6E,10E)-geranyllinalool + reduced [NADPH--hemoprotein reductase] + O2 = (3E,7E)-4,8,12-trimethyltrideca 1,3,7,11-tetraene + but-3-en-2-one + oxidized [NADPH--hemoprotein reductase] + 2 H2O + H(+). Its pathway is secondary metabolite biosynthesis; terpenoid biosynthesis. Its function is as follows. Component of the volatile terpenes biosynthesis pathways. Converts mainly geranyllinalool to trimethyltridecatetraene (TMTT). This is Trimethyltridecatetraene synthase from Zea mays (Maize).